The sequence spans 739 residues: Poly(A) polymerase alpha (739 aa).

Residues 1-17 (MPFPVTTQGSQQTQPPQ) show a composition bias toward low complexity. Residues 1–23 (MPFPVTTQGSQQTQPPQKHYGIT) are disordered. Phosphoserine is present on residues serine 10 and serine 24. ATP-binding positions include 100 to 102 (FGS), threonine 109, 113 to 115 (DID), aspartate 167, lysine 228, tyrosine 237, and 246 to 247 (GV). 3 residues coordinate Mg(2+): aspartate 113, aspartate 115, and aspartate 167. Glycyl lysine isopeptide (Lys-Gly) (interchain with G-Cter in SUMO) cross-links involve residues lysine 444, lysine 445, lysine 506, and lysine 507. A Nuclear localization signal 1 motif is present at residues 490-507 (RKQLHQLLPSHVLQKKKK). Disordered regions lie at residues 501 to 565 (VLQK…AVTA) and 580 to 700 (QINS…TIQT). The interval 508–643 (HSTEGVKLTP…AKIPNPIVGV (136 aa)) is ser/Thr-rich. Residues 518–534 (LNDSSLDLSMDSDNSMS) are compositionally biased toward low complexity. Positions 535 to 557 (VPSPTSAMKTSPLNSSGSSQGRN) are enriched in polar residues. Phosphoserine; by MAPK is present on serine 537. Residue serine 558 is modified to Phosphoserine. The segment covering 583–594 (SSESSGGTSSES) has biased composition (low complexity). Positions 595–604 (IPQTATQPAI) are enriched in polar residues. The segment covering 611–620 (TVSRVVSSTR) has biased composition (low complexity). Residues lysine 635 and lysine 644 each carry the N6-acetyllysine modification. Positions 644 to 659 (KRTSSPHKEESPKKTK) match the Nuclear localization signal 2 motif. 2 stretches are compositionally biased toward basic and acidic residues: residues 649 to 660 (PHKEESPKKTKT) and 676 to 686 (GHDKTETKEQL). Positions 671 to 739 (CLALSGHDKT…KNSIKLRLNR (69 aa)) are required for interaction with NUDT21. Low complexity predominate over residues 688-700 (TETSTTQSETIQT). Residue lysine 730 is modified to N6-acetyllysine; alternate. Lysine 730 participates in a covalent cross-link: Glycyl lysine isopeptide (Lys-Gly) (interchain with G-Cter in SUMO); alternate. Residue serine 732 is modified to Phosphoserine. Lysine 734 carries the post-translational modification N6-acetyllysine; alternate. Lysine 734 is covalently cross-linked (Glycyl lysine isopeptide (Lys-Gly) (interchain with G-Cter in SUMO); alternate).

The protein belongs to the poly(A) polymerase family. As to quaternary structure, monomer. Found in a complex with CPSF1, FIP1L1 and PAPOLA. Interacts with AHCYL1 and FIP1L1; the interaction with AHCYL1 seems to increase interaction with FIP1L1. Interacts with NUDT21; the interaction is diminished by acetylation. Interacts with KPNB1; the interaction promotes PAP nuclear import and is inhibited by acetylation of PAP. Mg(2+) serves as cofactor. Requires Mn(2+) as cofactor. Post-translationally, polysumoylated. Varying sumoylation depending on tissue- and cell-type. Highly sumoylated in bladder and NIH 3T3 cells. Sumoylation is required for nuclear localization and enhances PAP stability. Desumoylated by SENP1. Inhibits polymerase activity. Hyperphosphorylation on multiple CDK2 consensus and non-consensus sites in the C-terminal Ser/Thr-rich region represses PAP activity in late M-phase. Phosphorylation/dephosphorylation may regulate the interaction between PAP and CPSF. In terms of processing, acetylated in the C-terminus. Acetylation decreases interaction with NUDT21 and KPNB1, and inhibits nuclear localization through inhibiting binding to the importin alpha/beta complex.

Its subcellular location is the nucleus. The enzyme catalyses RNA(n) + ATP = RNA(n)-3'-adenine ribonucleotide + diphosphate. In terms of biological role, polymerase that creates the 3'-poly(A) tail of mRNA's. Also required for the endoribonucleolytic cleavage reaction at some polyadenylation sites. May acquire specificity through interaction with a cleavage and polyadenylation specificity factor (CPSF) at its C-terminus. The protein is Poly(A) polymerase alpha (PAPOLA) of Bos taurus (Bovine).